The following is a 929-amino-acid chain: Transcription initiation factor TFIID subunit 3 (929 aa).

2 disordered regions span residues 131 to 152 (IVSS…TSAE) and 176 to 197 (LGKR…RPRL). S183, S199, S229, and S243 each carry phosphoserine. Disordered stretches follow at residues 221–358 (TQKI…ETIQ) and 405–578 (DPFE…PWKE). Residues 265 to 288 (TKSFTPKTKTKTSSPGQKTKSPKT) are compositionally biased toward low complexity. K266 is subject to N6-acetyllysine. S291, S297, and S301 each carry phosphoserine. Composition is skewed to polar residues over residues 340–358 (PNRT…ETIQ) and 434–466 (PKAS…SWTM). T501 bears the Phosphothreonine mark. Residues 504–514 (PLHKVYEEKTK) show a composition bias toward basic and acidic residues. The segment covering 523–537 (KKLKKELKTKMKKKE) has biased composition (basic residues). Residues 538–578 (KQRDREREKDKNKDKSKEKDKVKEKEKDKETGRETKYPWKE) show a composition bias toward basic and acidic residues. K581 is covalently cross-linked (Glycyl lysine isopeptide (Lys-Gly) (interchain with G-Cter in SUMO2)). Composition is skewed to basic and acidic residues over residues 603 to 612 (KLKDGLVRKE) and 621 to 648 (KDRE…DKMK). The interval 603 to 658 (KLKDGLVRKEKEKHKDKKKDREKGKKDKDKREKEKVKDKGREDKMKAPAPPLVLPP) is disordered. S667 is subject to Phosphoserine. Over residues 692 to 701 (EKEKVKEKEK) the composition is skewed to basic and acidic residues. The tract at residues 692–748 (EKEKVKEKEKKKDKKEKKKKKEKEKEKKEKEREKEKREREKREKEKEKHKHEKIKVE) is disordered. Basic residues predominate over residues 702 to 713 (KKDKKEKKKKKE). Basic and acidic residues predominate over residues 714–737 (KEKEKKEKEREKEKREREKREKEK). K746 participates in a covalent cross-link: Glycyl lysine isopeptide (Lys-Gly) (interchain with G-Cter in SUMO2). Position 755 is a phosphoserine (S755). An N6-acetyllysine modification is found at K776. Residues 778–787 (VPAPEAKPAP) show a composition bias toward low complexity. The tract at residues 778 to 807 (VPAPEAKPAPSQNRPKTPPPAPAPAPGPML) is disordered. The span at 793–804 (KTPPPAPAPAPG) shows a compositional bias: pro residues. The PHD-type zinc-finger motif lies at 865–915 (IWICPGCNKPDDGSPMIGCDDCDDWYHWPCVGIMTAPPEEMQWFCPKCANK). Zn(2+) is bound by residues C868, C871, C883, C886, H891, C894, C909, and C912.

It belongs to the TAF3 family. In terms of assembly, component of the TFIID basal transcription factor complex, composed of TATA-box-binding protein TBP, and a number of TBP-associated factors (TAFs), including TAF1, TAF2, TAF3, TAF4, TAF5, TAF6, TAF7, TAF8, TAF9, TAF10, TAF11, TAF12 and TAF13. Interacts with TAF10 via the histone fold. Interacts with TAF13, TBP, SAP130 and GCN5L2. Interacts with TBPL2.

It is found in the nucleus. The TFIID basal transcription factor complex plays a major role in the initiation of RNA polymerase II (Pol II)-dependent transcription. TFIID recognizes and binds promoters with or without a TATA box via its subunit TBP, a TATA-box-binding protein, and promotes assembly of the pre-initiation complex (PIC). The TFIID complex consists of TBP and TBP-associated factors (TAFs), including TAF1, TAF2, TAF3, TAF4, TAF5, TAF6, TAF7, TAF8, TAF9, TAF10, TAF11, TAF12 and TAF13. The TFIID complex structure can be divided into 3 modules TFIID-A, TFIID-B, and TFIID-C. TAF3 forms the TFIID-A module together with TAF5 and TBP. Required in complex with TBPL2 for the differentiation of myoblasts into myocytes. The TAF3-TBPL2 complex replaces TFIID at specific promoters at an early stage in the differentiation process. The protein is Transcription initiation factor TFIID subunit 3 (TAF3) of Homo sapiens (Human).